The chain runs to 274 residues: MMSNQTVYQFIAENQNELLQLWTDTLKELSEQESYQLTDQVYENISKEYIDILLLSVKDENAAESQISELALRAVQIGLSMKFLATALAEFWKRLYTKMNDKRLPDQESTELIWQIDRFFSPINTEIFNQYSISWEKTVSLQKIALQELSAPLIPVFENITVMPLVGTIDTERAKRIMENLLNGVVKHRSQVVLIDITGVPVVDTMVAHHIIQASEAVRLVGAKCLLAGIRPEIAQTIVNLGIDLSQVITKNTLQKGIQTALEMTDRKIVSLGE.

An STAS domain is found at 150-265; it reads SAPLIPVFEN…KGIQTALEMT (116 aa). 2 positions are modified to phosphothreonine: Thr-171 and Thr-205.

In terms of assembly, interacts with RsbRB and RsbS in the stressosome. The stressosome probably also contains RsbRC and RsbRD. Phosphorylated by RsbT. This threonine phosphorylation abrogates the ability of RsbRA to stimulate RsbT in vitro.

In terms of biological role, acts as a positive regulator of sigma-B activity in response to salt and heat stress by stimulating the activity of the RsbT kinase toward RsbS in vitro. Its function is as follows. One of 4 functionally non-identical RsbR paralogs, it functions in the environmental signaling branch of the general stress response. Negative regulator of sigma-B activity. Non-phosphorylated RsbS binds to RsbT, preventing its association with RsbU. Requires any one of RsbRA, RsbRB, RsbRC or RsbRD to sequester RsbT. When RsbS and the RsbR paralog(s) are phosphorylated, they release RsbT, which can then bind and activate RsbU. The chain is RsbT co-antagonist protein RsbRA (rsbRA) from Bacillus subtilis (strain 168).